Here is a 61-residue protein sequence, read N- to C-terminus: Large ribosomal subunit protein uL30 (61 aa).

Belongs to the universal ribosomal protein uL30 family. Part of the 50S ribosomal subunit.

The protein is Large ribosomal subunit protein uL30 of Parafrankia sp. (strain EAN1pec).